Reading from the N-terminus, the 264-residue chain is S-adenosylmethionine decarboxylase proenzyme (264 aa).

Ser112 serves as the catalytic Schiff-base intermediate with substrate; via pyruvic acid. Position 112 is a pyruvic acid (Ser); by autocatalysis (Ser112). The active-site Proton acceptor; for processing activity is the His117. Cys140 (proton donor; for catalytic activity) is an active-site residue.

Belongs to the prokaryotic AdoMetDC family. Type 2 subfamily. In terms of assembly, heterooctamer of four alpha and four beta chains arranged as a tetramer of alpha/beta heterodimers. Requires pyruvate as cofactor. Is synthesized initially as an inactive proenzyme. Formation of the active enzyme involves a self-maturation process in which the active site pyruvoyl group is generated from an internal serine residue via an autocatalytic post-translational modification. Two non-identical subunits are generated from the proenzyme in this reaction, and the pyruvate is formed at the N-terminus of the alpha chain, which is derived from the carboxyl end of the proenzyme. The post-translation cleavage follows an unusual pathway, termed non-hydrolytic serinolysis, in which the side chain hydroxyl group of the serine supplies its oxygen atom to form the C-terminus of the beta chain, while the remainder of the serine residue undergoes an oxidative deamination to produce ammonia and the pyruvoyl group blocking the N-terminus of the alpha chain.

The catalysed reaction is S-adenosyl-L-methionine + H(+) = S-adenosyl 3-(methylsulfanyl)propylamine + CO2. Its pathway is amine and polyamine biosynthesis; S-adenosylmethioninamine biosynthesis; S-adenosylmethioninamine from S-adenosyl-L-methionine: step 1/1. Catalyzes the decarboxylation of S-adenosylmethionine to S-adenosylmethioninamine (dcAdoMet), the propylamine donor required for the synthesis of the polyamines spermine and spermidine from the diamine putrescine. The sequence is that of S-adenosylmethionine decarboxylase proenzyme from Salmonella arizonae (strain ATCC BAA-731 / CDC346-86 / RSK2980).